Here is a 180-residue protein sequence, read N- to C-terminus: MAQVSGMSDVPDMGRRQFMNLLTFGTITGTALGALYPVVKYFIPPASGGTGGGAVAKDALGNDIKVSEYLAKHLPGDRSLAQGIKGDPTYVIVTEDHQIANYGLNAVCTHLGCVVPWNVSENKFICPCHGSQYDSTGKVVRGPAPLSLALVKATVTEDDKLVFTPWTEIDFRTGKEPWWT.

The helical transmembrane segment at Leu21 to Ile43 threads the bilayer. In terms of domain architecture, Rieske spans Val66–Val162. Cys108, His110, Cys126, and His129 together coordinate [2Fe-2S] cluster. Residues Cys113 and Cys128 are joined by a disulfide bond.

Belongs to the Rieske iron-sulfur protein family. As to quaternary structure, the 4 large subunits of the cytochrome b6-f complex are cytochrome b6, subunit IV (17 kDa polypeptide, PetD), cytochrome f and the Rieske protein, while the 4 small subunits are PetG, PetL, PetM and PetN. The complex functions as a dimer. [2Fe-2S] cluster is required as a cofactor.

The protein localises to the cellular thylakoid membrane. The catalysed reaction is 2 oxidized [plastocyanin] + a plastoquinol + 2 H(+)(in) = 2 reduced [plastocyanin] + a plastoquinone + 4 H(+)(out). Functionally, component of the cytochrome b6-f complex, which mediates electron transfer between photosystem II (PSII) and photosystem I (PSI), cyclic electron flow around PSI, and state transitions. In Thermosynechococcus vestitus (strain NIES-2133 / IAM M-273 / BP-1), this protein is Cytochrome b6-f complex iron-sulfur subunit.